The following is a 260-amino-acid chain: Thrombin-like enzyme acutobin (260 aa).

A signal peptide spans 1-18 (MVLIRVLANLLILQLSYA). The propeptide occupies 19-24 (QKSSEL). A Peptidase S1 domain is found at 25-251 (VIGGVECDIN…YNDWIRSITA (227 aa)). 6 disulfides stabilise this stretch: Cys31–Cys165, Cys52–Cys68, Cys102–Cys258, Cys144–Cys212, Cys176–Cys191, and Cys202–Cys227. His67 serves as the catalytic Charge relay system. N-linked (GlcNAc...) asparagine glycans are attached at residues Asn101 and Asn105. Catalysis depends on Asp112, which acts as the Charge relay system. Asn124 carries N-linked (GlcNAc...) asparagine glycosylation. Ser206 functions as the Charge relay system in the catalytic mechanism. Asn253 carries N-linked (GlcNAc...) asparagine glycosylation.

Belongs to the peptidase S1 family. Snake venom subfamily. In terms of assembly, monomer. Post-translationally, N-glycosylated. Expressed by the venom gland.

It localises to the secreted. Thrombin-like snake venom serine protease that coagulates human fibrinogen by hydrolysis of the alpha chains (FGA). This Deinagkistrodon acutus (Hundred-pace snake) protein is Thrombin-like enzyme acutobin.